Here is a 615-residue protein sequence, read N- to C-terminus: Dihydroxy-acid dehydratase (615 aa).

A Mg(2+)-binding site is contributed by Asp-81. Cys-122 contributes to the [2Fe-2S] cluster binding site. 2 residues coordinate Mg(2+): Asp-123 and Lys-124. Residue Lys-124 is modified to N6-carboxylysine. Cys-195 is a binding site for [2Fe-2S] cluster. Position 491 (Glu-491) interacts with Mg(2+). Ser-517 (proton acceptor) is an active-site residue.

The protein belongs to the IlvD/Edd family. As to quaternary structure, homodimer. [2Fe-2S] cluster serves as cofactor. It depends on Mg(2+) as a cofactor.

The catalysed reaction is (2R)-2,3-dihydroxy-3-methylbutanoate = 3-methyl-2-oxobutanoate + H2O. It carries out the reaction (2R,3R)-2,3-dihydroxy-3-methylpentanoate = (S)-3-methyl-2-oxopentanoate + H2O. The protein operates within amino-acid biosynthesis; L-isoleucine biosynthesis; L-isoleucine from 2-oxobutanoate: step 3/4. It functions in the pathway amino-acid biosynthesis; L-valine biosynthesis; L-valine from pyruvate: step 3/4. Its function is as follows. Functions in the biosynthesis of branched-chain amino acids. Catalyzes the dehydration of (2R,3R)-2,3-dihydroxy-3-methylpentanoate (2,3-dihydroxy-3-methylvalerate) into 2-oxo-3-methylpentanoate (2-oxo-3-methylvalerate) and of (2R)-2,3-dihydroxy-3-methylbutanoate (2,3-dihydroxyisovalerate) into 2-oxo-3-methylbutanoate (2-oxoisovalerate), the penultimate precursor to L-isoleucine and L-valine, respectively. In Shewanella halifaxensis (strain HAW-EB4), this protein is Dihydroxy-acid dehydratase.